The chain runs to 384 residues: D-alanine--D-alanine ligase (384 aa).

Positions 167–374 (KKLFAAEGLP…YPTLLATMVD (208 aa)) constitute an ATP-grasp domain. ATP is bound at residue 195–250 (CERLSLPVFVKPARGGSSIGISRVSSWGQLPSAIAYARRHDPKVIVEAAVNGRELE). 3 residues coordinate Mg(2+): Asp-329, Glu-341, and Asn-343.

Belongs to the D-alanine--D-alanine ligase family. Mg(2+) serves as cofactor. It depends on Mn(2+) as a cofactor.

Its subcellular location is the cytoplasm. It carries out the reaction 2 D-alanine + ATP = D-alanyl-D-alanine + ADP + phosphate + H(+). It functions in the pathway cell wall biogenesis; peptidoglycan biosynthesis. Its function is as follows. Cell wall formation. The chain is D-alanine--D-alanine ligase from Mycobacterium leprae (strain TN).